Here is a 334-residue protein sequence, read N- to C-terminus: Siroheme decarboxylase (334 aa).

Histidine 93 is a catalytic residue.

The protein belongs to the Ahb/Nir family.

The enzyme catalyses siroheme + 2 H(+) = 12,18-didecarboxysiroheme + 2 CO2. It participates in porphyrin-containing compound metabolism. Its function is as follows. Involved in heme d1 biosynthesis. Catalyzes the decarboxylation of siroheme into didecarboxysiroheme. Siroheme is probably decarboxylated to monodecarboxysiroheme, which is in turn decarboxylated to didecarboxysiroheme. The chain is Siroheme decarboxylase from Hydrogenobacter thermophilus (strain DSM 6534 / IAM 12695 / TK-6).